The chain runs to 887 residues: Alanine--tRNA ligase (887 aa).

Positions 564, 568, 676, and 680 each coordinate Zn(2+).

This sequence belongs to the class-II aminoacyl-tRNA synthetase family. It depends on Zn(2+) as a cofactor.

The protein localises to the cytoplasm. It catalyses the reaction tRNA(Ala) + L-alanine + ATP = L-alanyl-tRNA(Ala) + AMP + diphosphate. Its function is as follows. Catalyzes the attachment of alanine to tRNA(Ala) in a two-step reaction: alanine is first activated by ATP to form Ala-AMP and then transferred to the acceptor end of tRNA(Ala). Also edits incorrectly charged Ser-tRNA(Ala) and Gly-tRNA(Ala) via its editing domain. This is Alanine--tRNA ligase from Rhizobium meliloti (strain 1021) (Ensifer meliloti).